The primary structure comprises 71 residues: Conotoxin Pl071 (71 aa).

Residues 1–20 (MSRLFMILLVICVITLGTDA) form the signal peptide. A propeptide spanning residues 21–31 (SQAEDSGTEKR) is cleaved from the precursor. At tyrosine 69 the chain carries Tyrosine amide.

It belongs to the conotoxin NSf-1 superfamily. In terms of tissue distribution, expressed by the venom duct.

It localises to the secreted. Functionally, probable neurotoxin with unknown target. Possibly targets ion channels. The chain is Conotoxin Pl071 from Conus planorbis (Planorbis cone).